A 145-amino-acid polypeptide reads, in one-letter code: Transthyretin (145 aa).

The first 20 residues, M1 to A20, serve as a signal peptide directing secretion. Position 28 is a sulfocysteine (C28). L-thyroxine is bound at residue K33. The residue at position 60 (E60) is a 4-carboxyglutamate. The residue at position 70 (S70) is a Phosphoserine. E72 is an L-thyroxine binding site. A glycan (N-linked (GlcNAc...) asparagine) is linked at N116. S135 contributes to the L-thyroxine binding site.

This sequence belongs to the transthyretin family. In terms of assembly, homotetramer. Dimer of dimers. In the homotetramer, subunits assemble around a central channel that can accommodate two ligand molecules. Interacts with RBP4. Post-translationally, sulfonation of the reactive cysteine Cys-28 enhances the stability of the native conformation of TTR, avoiding misassembly of the protein leading to amyloid formation.

Its subcellular location is the secreted. In terms of biological role, thyroid hormone-binding protein. Probably transports thyroxine from the bloodstream to the brain. The polypeptide is Transthyretin (TTR) (Erinaceus europaeus (Western European hedgehog)).